The sequence spans 137 residues: Small ribosomal subunit protein bS16 (137 aa).

Basic and acidic residues-rich tracts occupy residues 80–99 (KSPE…KRLQ) and 111–125 (VATE…KEAP). A disordered region spans residues 80 to 137 (KSPEEAQKGGMRKGEFKRLQAEQAAKAQKKAVATEEPKAEEAKEAPPAESQAAEGKEE). The segment covering 126-137 (PAESQAAEGKEE) has biased composition (low complexity).

Belongs to the bacterial ribosomal protein bS16 family.

In Coxiella burnetii (strain Dugway 5J108-111), this protein is Small ribosomal subunit protein bS16.